Here is a 384-residue protein sequence, read N- to C-terminus: Calreticulin-3 (384 aa).

Positions 1 to 19 are cleaved as a signal peptide; that stretch reads MAAARVPLWAICVRRVALA. Positions 20 to 197 are N-domain; sequence TVYFQEEFLD…GQSIESGSIE (178 aa). An N-linked (GlcNAc...) asparagine glycan is attached at asparagine 42. The cysteines at positions 105 and 137 are disulfide-linked. Positions 109, 111, 128, and 135 each coordinate an alpha-D-glucoside. Repeat copies occupy residues 191–202, 209–220, 222–231, 235–246, 250–260, 264–272, and 274–284. Residues 191-246 are 4 X approximate repeats; the sequence is IESGSIEYDWQLTSLKKMEKASAEAEGWDQAAKDKSQDWEKHFLDASASKPSDWKG. The P-domain stretch occupies residues 198 to 294; it reads YDWQLTSLKK…YLTEYDLSEF (97 aa). Residues 250–284 form a 3 X approximate repeats region; the sequence is GDWQAAMLQKPPYQDGLKPEGIDKDVWLHQKMKNS. A C-domain region spans residues 295–384; the sequence is ENIGAVGLEL…FKGFHRRNEF (90 aa). Glutamate 303 serves as a coordination point for an alpha-D-glucoside. The Prevents secretion from ER motif lies at 381–384; that stretch reads RNEF.

This sequence belongs to the calreticulin family. As to quaternary structure, component of an EIF2 complex at least composed of CELF1/CUGBP1, CALR, CALR3, EIF2S1, EIF2S2, HSP90B1 and HSPA5.

Its subcellular location is the endoplasmic reticulum lumen. Its function is as follows. During spermatogenesis, may act as a lectin-independent chaperone for specific client proteins such as ADAM3. CALR3 capacity for calcium-binding may be absent or much lower than that of CALR. Required for sperm fertility. This is Calreticulin-3 (CALR3) from Bos taurus (Bovine).